Here is a 968-residue protein sequence, read N- to C-terminus: Phosphatidylserine decarboxylase 2 proenzyme (968 aa).

Residues 1-25 (MAKVMRLIIFVCVALVAISVPAASS) form the signal peptide. Active-site charge relay system; for autoendoproteolytic cleavage activity residues include Asp-500, His-570, and Ser-683. The active-site Schiff-base intermediate with substrate; via pyruvic acid; for decarboxylase activity is the Ser-683. Ser-683 is modified (pyruvic acid (Ser); by autocatalysis).

Belongs to the phosphatidylserine decarboxylase family. In terms of assembly, heterodimer of a large membrane-associated beta subunit and a small pyruvoyl-containing alpha subunit. It depends on pyruvate as a cofactor. Post-translationally, is synthesized initially as an inactive proenzyme. Formation of the active enzyme involves a self-maturation process in which the active site pyruvoyl group is generated from an internal serine residue via an autocatalytic post-translational modification. Two non-identical subunits are generated from the proenzyme in this reaction, and the pyruvate is formed at the N-terminus of the alpha chain, which is derived from the carboxyl end of the proenzyme. The autoendoproteolytic cleavage occurs by a canonical serine protease mechanism, in which the side chain hydroxyl group of the serine supplies its oxygen atom to form the C-terminus of the beta chain, while the remainder of the serine residue undergoes an oxidative deamination to produce ammonia and the pyruvoyl prosthetic group on the alpha chain. During this reaction, the Ser that is part of the protease active site of the proenzyme becomes the pyruvoyl prosthetic group, which constitutes an essential element of the active site of the mature decarboxylase.

The protein resides in the parasitophorous vacuole. It localises to the cytoplasmic vesicle. The protein localises to the secretory vesicle. It catalyses the reaction a 1,2-diacyl-sn-glycero-3-phospho-L-serine + H(+) = a 1,2-diacyl-sn-glycero-3-phosphoethanolamine + CO2. It participates in phospholipid metabolism; phosphatidylethanolamine biosynthesis; phosphatidylethanolamine from CDP-diacylglycerol: step 2/2. Functionally, catalyzes the formation of phosphatidylethanolamine (PtdEtn) from phosphatidylserine (PtdSer). Plays a central role in phospholipid metabolism and in the interorganelle trafficking of phosphatidylserine. Can act on liposomal and host cell PtdSer. This chain is Phosphatidylserine decarboxylase 2 proenzyme, found in Toxoplasma gondii (strain ATCC 50853 / GT1).